Reading from the N-terminus, the 107-residue chain is Sperm-specific class P protein 34 (107 aa).

Positions 1-26 (MINVDPPTGNYPATGGNSTHNITSES) are disordered. The 107-residue stretch at 1–107 (MINVDPPTGN…GEIIVKLIAA (107 aa)) folds into the MSP domain. The segment covering 15-25 (GGNSTHNITSE) has biased composition (polar residues).

In terms of tissue distribution, expressed at higher level in testis.

The chain is Sperm-specific class P protein 34 (ssp-34) from Caenorhabditis elegans.